The sequence spans 2752 residues: Piezo-type mechanosensitive ion channel component 2 (2752 aa).

Residues 1–12 (MASEVVCGLIFR) lie on the Cytoplasmic side of the membrane. Residues 13–24 (LLLPICLAVACA) traverse the membrane as a helical segment. Residues 25 to 30 (FRYNGL) are Extracellular-facing. Residues 31-43 (SFVYLIYLLLIPL) form a helical membrane-spanning segment. Topologically, residues 44 to 50 (FSEPTKT) are cytoplasmic. A helical membrane pass occupies residues 51–76 (TMQGHTGRLLKSLCFISLSFLLLHII). Topologically, residues 77-122 (FHITLVSLEAQHRIAPGYNCSTWEKTFRQIGFESLKGADAGNGIRV) are extracellular. N-linked (GlcNAc...) asparagine glycosylation is present at N95. A helical membrane pass occupies residues 123–141 (FVPDIGMFIASLTIWLLCR). Residues 142–221 (NIVQKPVTDE…KEFIGNMITT (80 aa)) are Cytoplasmic-facing. A helical membrane pass occupies residues 222–237 (AGKVVVTILLGSSGMM). Residues 238-240 (LPS) lie on the Extracellular side of the membrane. The chain crosses the membrane as a helical span at residues 241 to 258 (LTSSVYFFVFLGLCTWWS). Over 259–264 (WCRTFD) the chain is Cytoplasmic. The helical transmembrane segment at 265-287 (PLLFSCLCVLLAIFTAGHLIGLY) threads the bilayer. Residues 288-335 (LYQFQFFQEAVPPNDYYARLFGIKSVIQTDCSSTWKIIVNPDLSWYHH) are Extracellular-facing. Residues 336-355 (ANPILLLVMYYTLATLIRIW) form a helical membrane-spanning segment. Residues 356 to 492 (LQEPLVQDEG…SIKVHAMVSV (137 aa)) are Cytoplasmic-facing. Positions 446–478 (STPQYRWEPSDESSEKREEEEEEKEEFEEERSR) are disordered. Residues 463–474 (EEEEEEKEEFEE) show a composition bias toward acidic residues. Residues 493–514 (FQFIMKQSYICALIAMMAWSIT) traverse the membrane as a helical segment. Over 515-519 (YHSWL) the chain is Extracellular. A helical transmembrane segment spans residues 520 to 531 (TFVLLIWSCTLW). Topologically, residues 532–535 (MIRN) are cytoplasmic. Residues 536–562 (RRKYAMISSPFMVVYGNLLLILQYIWS) form a helical membrane-spanning segment. The Extracellular portion of the chain corresponds to 563–583 (FELPEIKKVPGFLEKKEPGEL). The helical transmembrane segment at 584-614 (ASKILFTITFWLLLRQHLTEQKALQEKEALL) threads the bilayer. Topologically, residues 615–685 (SEVKIGSQEN…GNLVVAMFIK (71 aa)) are cytoplasmic. Positions 623-632 (ENEEKDEELQ) are enriched in acidic residues. A disordered region spans residues 623 to 664 (ENEEKDEELQDIQVEGEPKEEEEEEAKEEKQERKKVEQEEAE). A compositionally biased stretch (basic and acidic residues) spans 649 to 660 (KEEKQERKKVEQ). A helical membrane pass occupies residues 686 to 699 (YWIYVCGGMFFFVS). At 700–705 (FEGKIV) the chain is on the extracellular side. The chain crosses the membrane as a helical span at residues 706–724 (MYKIIYMVLFLFCVALYQV). Over 725 to 733 (HYEWWRKIL) the chain is Cytoplasmic. A helical transmembrane segment spans residues 734–753 (KYFWMSVVIYTMLVLIFIYT). At 754–785 (YQFENFPGLWQNMTGLKKEKLEDLGLKQFTVA) the chain is on the extracellular side. The chain crosses the membrane as a helical span at residues 786–807 (ELFTRIFIPTSFLLVCILHLHY). Over 808-940 (FHDRFLELTD…QVFMWWILEL (133 aa)) the chain is Cytoplasmic. At S838 the chain carries Phosphoserine. Basic and acidic residues predominate over residues 862 to 883 (PGEEKLEGYSEKAQKGDLGKDS). The interval 862–902 (PGEEKLEGYSEKAQKGDLGKDSEESEEDGEEEEESEEEEET) is disordered. A compositionally biased stretch (acidic residues) spans 884–902 (EESEEDGEEEEESEEEEET). The helical transmembrane segment at 941–956 (HIIKIVSSYIIWVSVK) threads the bilayer. Residues 957–962 (EVSLFN) lie on the Extracellular side of the membrane. A helical transmembrane segment spans residues 963–972 (YVFLISWAFA). The Cytoplasmic portion of the chain corresponds to 973–980 (LPYAKLRR). The chain crosses the membrane as a helical span at residues 981–1001 (LASSVCTVWTCVIIVCKMLYQ). Residues 1002 to 1057 (LQTIKPENFSVNCSLPNENQTNIPFNELNKSLLYSAPIDPTEWVGLRKSSPLLVYL) lie on the Extracellular side of the membrane. N-linked (GlcNAc...) asparagine glycosylation occurs at N1013. An intrachain disulfide couples C1014 to C1192. A helical membrane pass occupies residues 1058-1082 (RNNLLMLAILAFEVTIYRHQEYYRG). The Cytoplasmic portion of the chain corresponds to 1083–1123 (RNNLTAPVSRTIFHDITRLHLDDGLINCAKYFINYFFYKFG). Residues 1124–1138 (LETCFLMSVNVIGQR) form a helical membrane-spanning segment. Residues 1139–1140 (MD) lie on the Extracellular side of the membrane. A helical transmembrane segment spans residues 1141-1154 (FYAMIHACWLIAVL). The Cytoplasmic portion of the chain corresponds to 1155-1165 (YRRRRKAIAEI). The chain crosses the membrane as a helical span at residues 1166–1185 (WPKYCCFLACIITFQYFICI). Topologically, residues 1186-1222 (GIPPAPCRDYPWRFKGASFNDNIIKWLYFPDFIVRPN) are extracellular. Residues 1223-1243 (PVFLVYDFMLLLCASLQRQIF) form a helical membrane-spanning segment. The Cytoplasmic portion of the chain corresponds to 1244 to 1297 (EDENKAAVRIMAGDNVEICMNLDAASFSQHNPVPDFIHCRSYLDMSKVIIFSYL). A helical transmembrane segment spans residues 1298–1310 (FWFVLTIIFITGT). Residues 1311 to 1316 (TRISIF) are Extracellular-facing. Residues 1317–1329 (CMGYLVACFYFLL) traverse the membrane as a helical segment. Topologically, residues 1330-1338 (FGGDLLLKP) are cytoplasmic. Residues 1339–1364 (IKSILRYWDWLIAYNVFVITMKNILS) traverse the membrane as a helical segment. The Extracellular segment spans residues 1365–1413 (IGACGYIGTLVHNSCWLIQAFSLACTVKGYQMPAANSPCTLPSGEAGII). The chain crosses the membrane as a helical span at residues 1414-1430 (WDSICFAFLLLQRRVFM). Over 1431-1921 (SYYFLHVVAD…YAMYNTLVAR (491 aa)) the chain is Cytoplasmic. Positions 1458–1529 (TIVKAVKARI…EREADKQKAK (72 aa)) form a coiled coil. Disordered stretches follow at residues 1488-1534 (QQKY…KKKQ), 1593-1636 (ALRQ…KKSD), and 1844-1868 (SQDDSAGKNRMAVSPDDSRTDKLGS). Positions 1594–1615 (LRQRHKEKKRSAREERKRRRKG) are enriched in basic residues. The chain crosses the membrane as a helical span at residues 1922 to 1936 (SEMVCYFVIILNHMV). The Extracellular segment spans residues 1937–1943 (SASMITL). Residues 1944–1955 (LLPILIFLWAML) form a helical membrane-spanning segment. The Cytoplasmic segment spans residues 1956-1961 (SVPRPS). A helical membrane pass occupies residues 1962 to 1983 (RRFWMMAIVYTEVAIVVKYFFQ). Over 1984-2016 (FGFFPWNKNVEVNKDKPYHPPNIIGVEKKEGYV) the chain is Extracellular. The helical transmembrane segment at 2017 to 2035 (LYDLIQLLALFFHRSILKC) threads the bilayer. The Cytoplasmic portion of the chain corresponds to 2036-2189 (HGLWDEDDMT…HPEYSAVTDV (154 aa)). Disordered stretches follow at residues 2047 to 2069 (SGMAREESDDELSLGHGRRDSSD) and 2090 to 2135 (QQTA…SVLS). Residues 2100-2127 (GSSSEPSQRSSFSSNRSQRGSTSTRNSS) show a composition bias toward low complexity. Residues 2190–2209 (YVLMFLADTVDFIIIVFGFW) traverse the membrane as a helical segment. Topologically, residues 2210–2231 (AFGKHSAAADITSSLSEDQVPG) are extracellular. The chain crosses the membrane as a helical span at residues 2232–2252 (PFLVMVLIQFGTMVVDRALYL). Residues 2253-2256 (RKTV) are Cytoplasmic-facing. Residues 2257–2280 (LGKVIFQVILVFGIHFWMFFILPG) traverse the membrane as a helical segment. Over 2281-2289 (VTERKFSQN) the chain is Extracellular. Residues 2290 to 2312 (LVAQLWYFVKCVYFGLSAYQIRC) traverse the membrane as a helical segment. The Cytoplasmic portion of the chain corresponds to 2313–2397 (GYPTRVLGNF…YPQPRGQKKK (85 aa)). A helical transmembrane segment spans residues 2398 to 2421 (KVVKYGMGGMIIVLLICIVWFPLL). At 2422–2669 (FMSLIKSVAG…PSLGFLAGYG (248 aa)) the chain is on the extracellular side. Residues 2670 to 2690 (IMGLYASVVLVIGKFVREFFS) traverse the membrane as a helical segment. The Cytoplasmic portion of the chain corresponds to 2691–2752 (GISHSIMFEE…MIKWTREKTN (62 aa)).

It belongs to the PIEZO (TC 1.A.75) family. As to quaternary structure, homotrimer; the homotrimer forms a propeller-shaped Piezo channel with a cation-ion conducting pore. Heterotrimeric interaction may occur between PIEZO1 and PIEZO2. Interacts with STOML3. Interacts with TMC7; the interaction inhibits PIEZO2-conducted mechanically activated currents. Interacts with TMC1; the interaction may be part of the MET complex. Interacts with MDFIC (via C-terminus); the interaction prolongs Piezo channel inactivation. Interacts with MDFI (via C-terminus); the interaction prolongs Piezo channel inactivation.

Its subcellular location is the cell membrane. The enzyme catalyses Ca(2+)(in) = Ca(2+)(out). Regulated by auxillary subunits MDFIC and MDFI. Channel activity is inhibited by TMEM120A. Phosphatidic acid and lysophosphatidic acid inhibit PIEZO2 channel activity. Functionally, pore-forming subunit of the mechanosensitive non-specific cation Piezo channel required for rapidly adapting mechanically activated (MA) currents and has a key role in sensing touch and tactile pain. Piezo channels are homotrimeric three-blade propeller-shaped structures that utilize a cap-motion and plug-and-latch mechanism to gate their ion-conducting pathways. Expressed in sensory neurons, is essential for diverse physiological processes, including respiratory control, systemic metabolism, urinary function, and proprioception. Mediates airway stretch sensing, enabling efficient respiration at birth and maintaining normal breathing in adults. It regulates brown and beige adipose tissue morphology and function, preventing systemic hypermetabolism. In the lower urinary tract, acts as a sensor in both the bladder urothelium and innervating sensory neurons being required for bladder-stretch sensing and urethral micturition reflexes, ensuring proper urinary function. Additionally, PIEZO2 serves as the principal mechanotransducer in proprioceptors, facilitating proprioception and coordinated body movements. In inner ear hair cells, PIEZO1/2 subunits may constitute part of the mechanotransducer (MET) non-selective cation channel complex where they may act as pore-forming ion-conducting component in the complex. Required for Merkel-cell mechanotransduction. Plays a major role in light-touch mechanosensation. The chain is Piezo-type mechanosensitive ion channel component 2 from Homo sapiens (Human).